Reading from the N-terminus, the 452-residue chain is uncharacterized protein (452 aa).

One can recognise a TRAM domain in the interval 3 to 61; sequence KVKIGEKYEVDITSMGHEGEGVGRIDGIAVFVKGALKGERVIVEIEEVHKNYLKGYTVK. Residues C74, C80, C83, and C160 each coordinate [4Fe-4S] cluster. Residues Q284, Y313, E334, and D382 each coordinate S-adenosyl-L-methionine. Residue C409 is the Nucleophile of the active site.

This sequence belongs to the class I-like SAM-binding methyltransferase superfamily. RNA M5U methyltransferase family.

This is an uncharacterized protein from Caldanaerobacter subterraneus subsp. tengcongensis (strain DSM 15242 / JCM 11007 / NBRC 100824 / MB4) (Thermoanaerobacter tengcongensis).